Reading from the N-terminus, the 602-residue chain is DNA mismatch repair protein MutL (602 aa).

The disordered stretch occupies residues 337 to 367 (KRPFPGSSTNYSGIQQDTKKQESDNPEKARG). Residues 342-352 (GSSTNYSGIQQ) are compositionally biased toward polar residues. Over residues 353 to 367 (DTKKQESDNPEKARG) the composition is skewed to basic and acidic residues.

The protein belongs to the DNA mismatch repair MutL/HexB family.

This protein is involved in the repair of mismatches in DNA. It is required for dam-dependent methyl-directed DNA mismatch repair. May act as a 'molecular matchmaker', a protein that promotes the formation of a stable complex between two or more DNA-binding proteins in an ATP-dependent manner without itself being part of a final effector complex. This chain is DNA mismatch repair protein MutL, found in Kosmotoga olearia (strain ATCC BAA-1733 / DSM 21960 / TBF 19.5.1).